Here is a 310-residue protein sequence, read N- to C-terminus: Protoheme IX farnesyltransferase (310 aa).

A run of 9 helical transmembrane segments spans residues valine 26–valine 45, isoleucine 49–tryptophan 71, glycine 95–alanine 115, leucine 118–tryptophan 138, isoleucine 147–glycine 167, leucine 174–phenylalanine 194, valine 220–glycine 240, leucine 243–tryptophan 263, and leucine 289–glycine 309.

It belongs to the UbiA prenyltransferase family. Protoheme IX farnesyltransferase subfamily. As to quaternary structure, interacts with CtaA.

The protein resides in the cell inner membrane. It carries out the reaction heme b + (2E,6E)-farnesyl diphosphate + H2O = Fe(II)-heme o + diphosphate. It participates in porphyrin-containing compound metabolism; heme O biosynthesis; heme O from protoheme: step 1/1. Converts heme B (protoheme IX) to heme O by substitution of the vinyl group on carbon 2 of heme B porphyrin ring with a hydroxyethyl farnesyl side group. This chain is Protoheme IX farnesyltransferase, found in Cereibacter sphaeroides (strain ATCC 17029 / ATH 2.4.9) (Rhodobacter sphaeroides).